A 437-amino-acid chain; its full sequence is Probable receptor-like serine/threonine-protein kinase At4g34500 (437 aa).

Residues 25–45 (LVIAICSVFILLISLLIFLFV) form a helical membrane-spanning segment. In terms of domain architecture, Protein kinase spans 145–426 (FSDDNMIGEG…MLEAEDFPFR (282 aa)). ATP-binding positions include 151 to 159 (IGEGGYGVV) and lysine 173. Tyrosine 220 is modified (phosphotyrosine). The active-site Proton acceptor is aspartate 273. A Phosphoserine modification is found at serine 277. 2 positions are modified to phosphothreonine: threonine 307 and threonine 312. Position 320 is a phosphotyrosine (tyrosine 320).

The protein belongs to the protein kinase superfamily. Ser/Thr protein kinase family.

It is found in the cell membrane. It catalyses the reaction L-seryl-[protein] + ATP = O-phospho-L-seryl-[protein] + ADP + H(+). It carries out the reaction L-threonyl-[protein] + ATP = O-phospho-L-threonyl-[protein] + ADP + H(+). In Arabidopsis thaliana (Mouse-ear cress), this protein is Probable receptor-like serine/threonine-protein kinase At4g34500.